A 1403-amino-acid chain; its full sequence is Centrosomal protein of 162 kDa (1403 aa).

A disordered region spans residues 18-42 (KELSDDSFENSDKTARQSKKEMKKK). Phosphoserine is present on residues Ser157 and Ser160. Residues 170 to 231 (QANAELTDDE…EKISVPKQEE (62 aa)) are disordered. Residues 208 to 231 (TKDEEMPSKENSKSEKISVPKQEE) are compositionally biased toward basic and acidic residues. A phosphoserine mark is found at Ser474 and Ser475. A disordered region spans residues 476–504 (EEEGAVMGKQVPYKKARSAPPLLKRKPQS). A compositionally biased stretch (basic residues) spans 487–502 (PYKKARSAPPLLKRKP). Coiled-coil stretches lie at residues 617–670 (KRVQ…QDNY), 698–1121 (VTGE…MLSN), 1171–1206 (EVLQ…QFEN), and 1235–1386 (CQNA…LHRQ).

The protein belongs to the CEP162 family. As to quaternary structure, interacts with CEP290. Interacts with CPNE4. Interacts with alpha-tubulin.

It localises to the cytoplasm. It is found in the cytoskeleton. The protein localises to the microtubule organizing center. Its subcellular location is the centrosome. The protein resides in the centriole. It localises to the spindle. It is found in the nucleus. Its function is as follows. Required to promote assembly of the transition zone in primary cilia. Acts by specifically recognizing and binding the axonemal microtubule. Localizes to the distal ends of centrioles before ciliogenesis and directly binds to axonemal microtubule, thereby promoting and restricting transition zone formation specifically at the cilia base. Required to mediate CEP290 association with microtubules. The protein is Centrosomal protein of 162 kDa (CEP162) of Homo sapiens (Human).